We begin with the raw amino-acid sequence, 329 residues long: Putative glycosyltransferase CsbB (329 aa).

The next 2 helical transmembrane spans lie at 231 to 251 (CFYT…ATFV) and 264 to 284 (FTII…LGII).

This sequence belongs to the glycosyltransferase 2 family. GtrB subfamily.

It localises to the cell membrane. The chain is Putative glycosyltransferase CsbB (csbB) from Bacillus subtilis (strain 168).